We begin with the raw amino-acid sequence, 513 residues long: Bifunctional purine biosynthesis protein PurH (513 aa).

Positions 1 to 144 constitute an MGS-like domain; sequence MKRALISVSD…KNYQDVTVVT (144 aa).

It belongs to the PurH family.

It catalyses the reaction (6R)-10-formyltetrahydrofolate + 5-amino-1-(5-phospho-beta-D-ribosyl)imidazole-4-carboxamide = 5-formamido-1-(5-phospho-D-ribosyl)imidazole-4-carboxamide + (6S)-5,6,7,8-tetrahydrofolate. The enzyme catalyses IMP + H2O = 5-formamido-1-(5-phospho-D-ribosyl)imidazole-4-carboxamide. It participates in purine metabolism; IMP biosynthesis via de novo pathway; 5-formamido-1-(5-phospho-D-ribosyl)imidazole-4-carboxamide from 5-amino-1-(5-phospho-D-ribosyl)imidazole-4-carboxamide (10-formyl THF route): step 1/1. Its pathway is purine metabolism; IMP biosynthesis via de novo pathway; IMP from 5-formamido-1-(5-phospho-D-ribosyl)imidazole-4-carboxamide: step 1/1. The sequence is that of Bifunctional purine biosynthesis protein PurH from Lactobacillus acidophilus (strain ATCC 700396 / NCK56 / N2 / NCFM).